The chain runs to 443 residues: uncharacterized protein (443 aa).

Active-site proton acceptor residues include histidine 164 and aspartate 386.

Belongs to the plant acyltransferase family.

This is an uncharacterized protein from Arabidopsis thaliana (Mouse-ear cress).